The primary structure comprises 224 residues: Probable C-&gt;U-editing enzyme APOBEC-2 (224 aa).

A disordered region spans residues 1–25 (MAQKEEAAAATEAASQNGEDLENLD). Glu-60 and His-98 together coordinate Zn(2+). The region spanning 64–169 (GRNKTFLCYV…LEIQDALKKL (106 aa)) is the CMP/dCMP-type deaminase domain. Glu-100 serves as the catalytic Proton donor. Zn(2+)-binding residues include Cys-128 and Cys-131.

Belongs to the cytidine and deoxycytidylate deaminase family. In terms of assembly, homotetramer. Zn(2+) serves as cofactor.

It carries out the reaction cytidine(6666) in apoB mRNA + H2O + H(+) = uridine(6666) in apoB mRNA + NH4(+). Its function is as follows. Probable C to U editing enzyme whose physiological substrate is not yet known. Does not display detectable apoB mRNA editing. Has a low intrinsic cytidine deaminase activity. May play a role in the epigenetic regulation of gene expression through the process of active DNA demethylation. The chain is Probable C-&gt;U-editing enzyme APOBEC-2 (APOBEC2) from Pongo pygmaeus (Bornean orangutan).